Consider the following 262-residue polypeptide: MTKQFAVIGNPIEQSRSPELHHAFAEKLGIELNYSKRLAPLDGFEANVKTFFDQGGLGINVTVPFKEQAFAMCHQLTERAKIAKAVNTLWIENGQLHGDNTDGQGLVDAIQALNWPLQGTRILILGAGGATRGVIYPLVQAGVTEIVIANRTQQRAEQLVQDLAGSVSEATLRVMTLDQLHGNFDLVINATSASLSGDALVLPETLQFKYAYEMAYGKPSSFLDQAKARGVPTTEGFGMLVGQAIEAFSIWHGVKPNLTDFL.

Shikimate contacts are provided by residues 15–17 (SRS) and T62. K66 serves as the catalytic Proton acceptor. Residue E78 coordinates NADP(+). Positions 87 and 102 each coordinate shikimate. NADP(+)-binding positions include 126–130 (GAGGA), 150–155 (NRTQQR), and M214. Shikimate is bound at residue Y216. G236 is an NADP(+) binding site.

The protein belongs to the shikimate dehydrogenase family. As to quaternary structure, homodimer.

It catalyses the reaction shikimate + NADP(+) = 3-dehydroshikimate + NADPH + H(+). It participates in metabolic intermediate biosynthesis; chorismate biosynthesis; chorismate from D-erythrose 4-phosphate and phosphoenolpyruvate: step 4/7. Involved in the biosynthesis of the chorismate, which leads to the biosynthesis of aromatic amino acids. Catalyzes the reversible NADPH linked reduction of 3-dehydroshikimate (DHSA) to yield shikimate (SA). The polypeptide is Shikimate dehydrogenase (NADP(+)) (Acinetobacter baylyi (strain ATCC 33305 / BD413 / ADP1)).